A 356-amino-acid chain; its full sequence is Histidinol-phosphate aminotransferase 1 (356 aa).

Lys217 bears the N6-(pyridoxal phosphate)lysine mark.

Belongs to the class-II pyridoxal-phosphate-dependent aminotransferase family. Histidinol-phosphate aminotransferase subfamily. In terms of assembly, homodimer. Requires pyridoxal 5'-phosphate as cofactor.

The enzyme catalyses L-histidinol phosphate + 2-oxoglutarate = 3-(imidazol-4-yl)-2-oxopropyl phosphate + L-glutamate. It participates in amino-acid biosynthesis; L-histidine biosynthesis; L-histidine from 5-phospho-alpha-D-ribose 1-diphosphate: step 7/9. The chain is Histidinol-phosphate aminotransferase 1 from Burkholderia mallei (strain ATCC 23344).